The primary structure comprises 535 residues: CTP synthase (535 aa).

Residues 1–270 (MSKNTKYVFV…DRLVCEKLGL (270 aa)) are amidoligase domain. Residue S16 coordinates CTP. Residue S16 coordinates UTP. 17–22 (SLGKGI) lines the ATP pocket. Y57 provides a ligand contact to L-glutamine. D74 contacts ATP. Mg(2+) contacts are provided by D74 and E144. CTP contacts are provided by residues 151-153 (DIE), 191-196 (KTKPTQ), and K227. Residues 191–196 (KTKPTQ) and K227 contribute to the UTP site. One can recognise a Glutamine amidotransferase type-1 domain in the interval 295 to 535 (KIALVGKYVE…GFVGAALNNK (241 aa)). Position 357 (G357) interacts with L-glutamine. C384 functions as the Nucleophile; for glutamine hydrolysis in the catalytic mechanism. Residues 385–388 (LGMQ), E408, and R465 each bind L-glutamine. Catalysis depends on residues H510 and E512.

This sequence belongs to the CTP synthase family. Homotetramer.

The catalysed reaction is UTP + L-glutamine + ATP + H2O = CTP + L-glutamate + ADP + phosphate + 2 H(+). It catalyses the reaction L-glutamine + H2O = L-glutamate + NH4(+). The enzyme catalyses UTP + NH4(+) + ATP = CTP + ADP + phosphate + 2 H(+). It functions in the pathway pyrimidine metabolism; CTP biosynthesis via de novo pathway; CTP from UDP: step 2/2. Allosterically activated by GTP, when glutamine is the substrate; GTP has no effect on the reaction when ammonia is the substrate. The allosteric effector GTP functions by stabilizing the protein conformation that binds the tetrahedral intermediate(s) formed during glutamine hydrolysis. Inhibited by the product CTP, via allosteric rather than competitive inhibition. Functionally, catalyzes the ATP-dependent amination of UTP to CTP with either L-glutamine or ammonia as the source of nitrogen. Regulates intracellular CTP levels through interactions with the four ribonucleotide triphosphates. The polypeptide is CTP synthase (Clostridium perfringens (strain ATCC 13124 / DSM 756 / JCM 1290 / NCIMB 6125 / NCTC 8237 / Type A)).